We begin with the raw amino-acid sequence, 317 residues long: Aspartate carbamoyltransferase catalytic subunit (317 aa).

Arg-65 and Thr-66 together coordinate carbamoyl phosphate. Lys-93 serves as a coordination point for L-aspartate. Positions 115, 145, and 148 each coordinate carbamoyl phosphate. L-aspartate-binding residues include Arg-178 and Arg-233. Residues Gly-274 and Pro-275 each coordinate carbamoyl phosphate.

This sequence belongs to the aspartate/ornithine carbamoyltransferase superfamily. ATCase family. Heterododecamer (2C3:3R2) of six catalytic PyrB chains organized as two trimers (C3), and six regulatory PyrI chains organized as three dimers (R2).

The enzyme catalyses carbamoyl phosphate + L-aspartate = N-carbamoyl-L-aspartate + phosphate + H(+). Its pathway is pyrimidine metabolism; UMP biosynthesis via de novo pathway; (S)-dihydroorotate from bicarbonate: step 2/3. In terms of biological role, catalyzes the condensation of carbamoyl phosphate and aspartate to form carbamoyl aspartate and inorganic phosphate, the committed step in the de novo pyrimidine nucleotide biosynthesis pathway. The sequence is that of Aspartate carbamoyltransferase catalytic subunit from Bordetella bronchiseptica (strain ATCC BAA-588 / NCTC 13252 / RB50) (Alcaligenes bronchisepticus).